The primary structure comprises 188 residues: Elongation factor P (188 aa).

This sequence belongs to the elongation factor P family.

The protein localises to the cytoplasm. It participates in protein biosynthesis; polypeptide chain elongation. Functionally, involved in peptide bond synthesis. Stimulates efficient translation and peptide-bond synthesis on native or reconstituted 70S ribosomes in vitro. Probably functions indirectly by altering the affinity of the ribosome for aminoacyl-tRNA, thus increasing their reactivity as acceptors for peptidyl transferase. This Pelodictyon phaeoclathratiforme (strain DSM 5477 / BU-1) protein is Elongation factor P.